The sequence spans 682 residues: Potassium-transporting ATPase ATP-binding subunit (682 aa).

4 consecutive transmembrane segments (helical) span residues 34–54 (PVMF…LAMV), 58–78 (IAGS…TVLF), 219–239 (IALT…TATL), and 254–274 (VLVA…LSAI). Aspartate 307 acts as the 4-aspartylphosphate intermediate in catalysis. Residues aspartate 344, glutamate 348, 377–384 (FTAQSRMS), and lysine 395 contribute to the ATP site. Mg(2+) contacts are provided by aspartate 518 and aspartate 522. 3 helical membrane passes run 588–608 (FAII…LNVM), 616–636 (AILS…PLAL), and 662–682 (LVVP…LGLA).

The protein belongs to the cation transport ATPase (P-type) (TC 3.A.3) family. Type IA subfamily. The system is composed of three essential subunits: KdpA, KdpB and KdpC.

Its subcellular location is the cell inner membrane. It carries out the reaction K(+)(out) + ATP + H2O = K(+)(in) + ADP + phosphate + H(+). Its function is as follows. Part of the high-affinity ATP-driven potassium transport (or Kdp) system, which catalyzes the hydrolysis of ATP coupled with the electrogenic transport of potassium into the cytoplasm. This subunit is responsible for energy coupling to the transport system and for the release of the potassium ions to the cytoplasm. The polypeptide is Potassium-transporting ATPase ATP-binding subunit (Salmonella agona (strain SL483)).